The chain runs to 177 residues: SAYSvFN domain-containing protein 1 (177 aa).

Residues 1 to 100 lie on the Cytoplasmic side of the membrane; the sequence is MADFQEQLRQ…CLKYTLWTVY (100 aa). Positions 57-70 are enriched in polar residues; sequence SENSQDEAVTSSES. Positions 57–85 are disordered; that stretch reads SENSQDEAVTSSESELVPEEQPTRSTDHH. The helical intramembrane region spans 101–121; that stretch reads LLFWITLYVIAIKLSFGLVFL. Residues 122 to 177 lie on the Cytoplasmic side of the membrane; sequence MFSALFGIYFNTRTEPKKRNEMSAYSVFNKNCESIDGTLKAEQFEREIRYGSGSVR.

It belongs to the SAYSD1 family.

It is found in the endoplasmic reticulum membrane. Ufmylation 'reader' component of a translocation-associated quality control pathway, a mechanism that takes place when a ribosome has stalled during translation, and which is required to degrade clogged substrates. Specifically recognizes and binds ufmylated ribosomes when a ribosome has stalled, promoting the transport of stalled nascent chain to lysosomes for degradation. The polypeptide is SAYSvFN domain-containing protein 1 (Drosophila melanogaster (Fruit fly)).